A 200-amino-acid chain; its full sequence is Probable GTP-binding protein EngB (200 aa).

Residues 22-197 (DLPEIAFAGR…WQAIQDAVEE (176 aa)) enclose the EngB-type G domain. GTP-binding positions include 30-37 (GRSNVGKS), 57-61 (GRTQL), 78-81 (DLPG), 145-148 (TKCD), and 176-178 (FSA). Ser37 and Thr59 together coordinate Mg(2+).

It belongs to the TRAFAC class TrmE-Era-EngA-EngB-Septin-like GTPase superfamily. EngB GTPase family. Mg(2+) is required as a cofactor.

Necessary for normal cell division and for the maintenance of normal septation. This Trichlorobacter lovleyi (strain ATCC BAA-1151 / DSM 17278 / SZ) (Geobacter lovleyi) protein is Probable GTP-binding protein EngB.